Here is a 437-residue protein sequence, read N- to C-terminus: 5-hydroxytryptamine receptor 3B (437 aa).

The first 21 residues, methionine 1–proline 21, serve as a signal peptide directing secretion. Topologically, residues glutamine 22–proline 235 are extracellular. Asparagine 25, asparagine 92, and asparagine 134 each carry an N-linked (GlcNAc...) asparagine glycan. An intrachain disulfide couples cysteine 151 to cysteine 165. Residues leucine 236–glycine 255 form a helical membrane-spanning segment. At serine 256 to arginine 266 the chain is on the cytoplasmic side. Residues isoleucine 267–methionine 284 form a helical membrane-spanning segment. At serine 285 to threonine 295 the chain is on the extracellular side. A helical transmembrane segment spans residues serine 296–tyrosine 324. At glutamate 325–glutamine 410 the chain is on the cytoplasmic side. An HA-stretch; determines single-channel conductance in 5-HT3 receptors region spans residues phenylalanine 377–aspartate 409. A helical membrane pass occupies residues leucine 411–tryptophan 434. The Extracellular segment spans residues serine 435–methionine 437.

The protein belongs to the ligand-gated ion channel (TC 1.A.9) family. 5-hydroxytryptamine receptor (TC 1.A.9.2) subfamily. HTR3B sub-subfamily. Forms homopentameric as well as heteropentameric serotonin-activated cation-selective channel complexes with HTR3A. The homomeric complex is not functional. Heteropentameric complexes display properties which resemble that of neuronal serotonin-activated channels in vivo. Post-translationally, N-glycosylation is required for membrane localization. Expressed in peripheral neurons, but not in neurons of the central nervous system.

It is found in the postsynaptic cell membrane. It localises to the cell membrane. The catalysed reaction is Na(+)(in) = Na(+)(out). The enzyme catalyses K(+)(in) = K(+)(out). It carries out the reaction Ca(2+)(in) = Ca(2+)(out). Functionally, forms serotonin (5-hydroxytryptamine/5-HT3)-activated cation-selective channel complexes, which when activated cause fast, depolarizing responses in neurons. The protein is 5-hydroxytryptamine receptor 3B of Rattus norvegicus (Rat).